We begin with the raw amino-acid sequence, 353 residues long: Phospho-N-acetylmuramoyl-pentapeptide-transferase (353 aa).

The next 10 helical transmembrane spans lie at 13-33, 66-86, 88-108, 130-150, 162-182, 193-213, 229-249, 256-276, 281-301, and 330-350; these read ILGY…FFTL, TPTM…LISI, FSNL…IIGF, LILQ…LSDF, PLFD…IATS, GLAT…IYIT, IGEV…FLWY, VFMG…LAII, ILLL…ILQV, and KIIV…LITL.

Belongs to the glycosyltransferase 4 family. MraY subfamily. The cofactor is Mg(2+).

It is found in the cell inner membrane. The enzyme catalyses UDP-N-acetyl-alpha-D-muramoyl-L-alanyl-gamma-D-glutamyl-meso-2,6-diaminopimeloyl-D-alanyl-D-alanine + di-trans,octa-cis-undecaprenyl phosphate = di-trans,octa-cis-undecaprenyl diphospho-N-acetyl-alpha-D-muramoyl-L-alanyl-D-glutamyl-meso-2,6-diaminopimeloyl-D-alanyl-D-alanine + UMP. The protein operates within cell wall biogenesis; peptidoglycan biosynthesis. Catalyzes the initial step of the lipid cycle reactions in the biosynthesis of the cell wall peptidoglycan: transfers peptidoglycan precursor phospho-MurNAc-pentapeptide from UDP-MurNAc-pentapeptide onto the lipid carrier undecaprenyl phosphate, yielding undecaprenyl-pyrophosphoryl-MurNAc-pentapeptide, known as lipid I. The protein is Phospho-N-acetylmuramoyl-pentapeptide-transferase of Sulfurimonas denitrificans (strain ATCC 33889 / DSM 1251) (Thiomicrospira denitrificans (strain ATCC 33889 / DSM 1251)).